The sequence spans 508 residues: Photosystem II CP47 reaction center protein (508 aa).

The next 6 helical transmembrane spans lie at 21–36 (AVHIMHTALVSGWAGS), 101–115 (IVFSGLCFLAAIWHW), 140–156 (GIHLFLAGVACFGFGAF), 203–218 (IAAGTLGILAGLFHLS), 237–252 (VLSSSIAAVFFAAFVV), and 457–472 (TFALLFFFGHIWHGAR).

It belongs to the PsbB/PsbC family. PsbB subfamily. As to quaternary structure, PSII is composed of 1 copy each of membrane proteins PsbA, PsbB, PsbC, PsbD, PsbE, PsbF, PsbH, PsbI, PsbJ, PsbK, PsbL, PsbM, PsbT, PsbX, PsbY, PsbZ, Psb30/Ycf12, at least 3 peripheral proteins of the oxygen-evolving complex and a large number of cofactors. It forms dimeric complexes. Requires Binds multiple chlorophylls. PSII binds additional chlorophylls, carotenoids and specific lipids. as cofactor.

The protein localises to the plastid. Its subcellular location is the chloroplast thylakoid membrane. One of the components of the core complex of photosystem II (PSII). It binds chlorophyll and helps catalyze the primary light-induced photochemical processes of PSII. PSII is a light-driven water:plastoquinone oxidoreductase, using light energy to abstract electrons from H(2)O, generating O(2) and a proton gradient subsequently used for ATP formation. The polypeptide is Photosystem II CP47 reaction center protein (Lolium perenne (Perennial ryegrass)).